The sequence spans 429 residues: 3-isopropylmalate dehydratase large subunit (429 aa).

[4Fe-4S] cluster-binding residues include C303, C363, and C366.

This sequence belongs to the aconitase/IPM isomerase family. LeuC type 2 subfamily. In terms of assembly, heterodimer of LeuC and LeuD. [4Fe-4S] cluster is required as a cofactor.

The enzyme catalyses (2R,3S)-3-isopropylmalate = (2S)-2-isopropylmalate. The protein operates within amino-acid biosynthesis; L-leucine biosynthesis; L-leucine from 3-methyl-2-oxobutanoate: step 2/4. Its function is as follows. Catalyzes the isomerization between 2-isopropylmalate and 3-isopropylmalate, via the formation of 2-isopropylmaleate. This Caldicellulosiruptor saccharolyticus (strain ATCC 43494 / DSM 8903 / Tp8T 6331) protein is 3-isopropylmalate dehydratase large subunit.